The following is a 109-amino-acid chain: Small ribosomal subunit protein uS17 (109 aa).

This sequence belongs to the universal ribosomal protein uS17 family. As to quaternary structure, part of the 30S ribosomal subunit.

One of the primary rRNA binding proteins, it binds specifically to the 5'-end of 16S ribosomal RNA. This chain is Small ribosomal subunit protein uS17, found in Thermoplasma acidophilum (strain ATCC 25905 / DSM 1728 / JCM 9062 / NBRC 15155 / AMRC-C165).